The primary structure comprises 60 residues: Large ribosomal subunit protein bL32 (60 aa).

The segment at 1-60 (MAVQQNKKSRSARDMRRSHDALSENALSVEKTTGEVHLRHHVSPEGVYRGRKVVDKGADE) is disordered. Positions 11–22 (SARDMRRSHDAL) are enriched in basic and acidic residues.

It belongs to the bacterial ribosomal protein bL32 family.

This is Large ribosomal subunit protein bL32 from Pseudomonas putida (strain ATCC 700007 / DSM 6899 / JCM 31910 / BCRC 17059 / LMG 24140 / F1).